We begin with the raw amino-acid sequence, 230 residues long: Prolactin-3D1 (230 aa).

An N-terminal signal peptide occupies residues 1–29 (MQLTLTLSRASGMQLFLLVSSLLLWEKVA). 2 disulfide bridges follow: Cys81–Cys200 and Cys217–Cys225. Asn109 and Asn158 each carry an N-linked (GlcNAc...) asparagine glycan.

The protein belongs to the somatotropin/prolactin family.

It localises to the secreted. In Rattus norvegicus (Rat), this protein is Prolactin-3D1 (Prl3d1).